The primary structure comprises 145 residues: Large ribosomal subunit protein uL15 (145 aa).

A compositionally biased stretch (basic and acidic residues) spans 1–13 (MNLHELKYNEGAR). The disordered stretch occupies residues 1–56 (MNLHELKYNEGARKEKHRVGRGHAAGKGKQAGKGQSGQLKRTGSKPGFEGGQNPWY). Positions 14–26 (KEKHRVGRGHAAG) are enriched in basic residues.

This sequence belongs to the universal ribosomal protein uL15 family. In terms of assembly, part of the 50S ribosomal subunit.

Binds to the 23S rRNA. The protein is Large ribosomal subunit protein uL15 of Mycoplasma mobile (strain ATCC 43663 / 163K / NCTC 11711) (Mesomycoplasma mobile).